We begin with the raw amino-acid sequence, 115 residues long: NADH-ubiquinone oxidoreductase chain 3 (115 aa).

The next 3 helical transmembrane spans lie at 4–24, 55–75, and 86–106; these read MLIL…AFWL, FFLV…LLPL, and MLMT…AYEW.

It belongs to the complex I subunit 3 family. In terms of assembly, core subunit of respiratory chain NADH dehydrogenase (Complex I) which is composed of 45 different subunits. Interacts with TMEM186. Interacts with TMEM242.

It localises to the mitochondrion inner membrane. The enzyme catalyses a ubiquinone + NADH + 5 H(+)(in) = a ubiquinol + NAD(+) + 4 H(+)(out). In terms of biological role, core subunit of the mitochondrial membrane respiratory chain NADH dehydrogenase (Complex I) which catalyzes electron transfer from NADH through the respiratory chain, using ubiquinone as an electron acceptor. Essential for the catalytic activity of complex I. The sequence is that of NADH-ubiquinone oxidoreductase chain 3 from Microtus pennsylvanicus (Meadow vole).